A 357-amino-acid chain; its full sequence is Serine protease 1 (357 aa).

Positions 1-29 (MRRTTRARTGLSALLLAASLGLGAAPAGA) are cleaved as a signal peptide. The propeptide occupies 30–170 (DAPQRPAPTP…TRVPGVFQRE (141 aa)). Residues C184 and C204 are joined by a disulfide bond. Catalysis depends on charge relay system residues H203, D232, and S313. An intrachain disulfide couples C307 to C333.

Belongs to the peptidase S1 family.

It is found in the secreted. Functionally, serine protease that preferentially cleaves peptide bonds on the C-terminal side of aspartate and glutamate with a 10-fold higher reactivity for a glutamyl bond than an aspartyl bond. The sequence is that of Serine protease 1 from Streptomyces fradiae (Streptomyces roseoflavus).